We begin with the raw amino-acid sequence, 406 residues long: Elongation factor Tu (406 aa).

The region spanning 10-215 (KPHVNVGTIG…AIDEYIPTPV (206 aa)) is the tr-type G domain. The interval 19-26 (GHVDHGKT) is G1. 19–26 (GHVDHGKT) is a binding site for GTP. T26 contacts Mg(2+). The tract at residues 61–65 (GITIN) is G2. Residues 82–85 (DCPG) form a G3 region. GTP contacts are provided by residues 82 to 86 (DCPGH) and 137 to 140 (NKVD). The interval 137-140 (NKVD) is G4. Residues 175 to 177 (SAL) form a G5 region.

It belongs to the TRAFAC class translation factor GTPase superfamily. Classic translation factor GTPase family. EF-Tu/EF-1A subfamily. As to quaternary structure, monomer.

It localises to the cytoplasm. The enzyme catalyses GTP + H2O = GDP + phosphate + H(+). Functionally, GTP hydrolase that promotes the GTP-dependent binding of aminoacyl-tRNA to the A-site of ribosomes during protein biosynthesis. The protein is Elongation factor Tu of Thermus thermophilus (strain ATCC BAA-163 / DSM 7039 / HB27).